The sequence spans 1270 residues: Glycine betaine reductase ATRR (1270 aa).

The segment at 14–418 (FTQQVRASPN…MIKLRGYSVV (405 aa)) is adenylation (A) domain. The Carrier domain occupies 528–605 (KEDPIGIEDI…GHLDTVRAIR (78 aa)). O-(pantetheine 4'-phosphoryl)serine is present on Ser-565. Positions 643 to 937 (KTVLLTGVTG…EPLSWDDWVA (295 aa)) are carboxylic acid reductase domain R1. The interval 1026–1256 (PLSGKVAVVT…IYALRQPEHV (231 aa)) is aldehyde reductase domain R2.

It belongs to the NRP synthetase family.

The tetramethylammonium ion, which mimics the head group of glycine betaine, acts as a competitive inhibitor of ATRR A domain, whereas the potency decreased by three orders of magnitude with dimethylammonium. Choline is a mixed inhibitor for both glycine betaine reductase and aldehyde reductase activity but more potent in competition against glycine betaine in the first reduction step. Therefore, choline could act as a feedback inhibitor to regulate ATRR enzymatic activity. The lowered binding affinity of choline to R2 favors the release of choline after glycine betaine aldehyde reduction to avoid direct product inhibition. NRPS-like enzyme with an unusual domain architecture that converts back glycine betaine to choline via a 2-step reduction mechanism, and thereby can be an alternative source of choline. Permits direct reutilization of endogenously stored glycine betaine for on-demand biosynthesis of choline and choline derivatives, including phospholipid phosphatidylcholine (PC) which has an essential role in maintaining membrane integrity and functionality, or choline-O-sulfate, a mean for intracellular sulfate storage. Glycine betaine is activated by the adenylation (A) domain, and transferred to the thiolation (T) domain. Movement of the phosphopantetheine arm to the thioester reductase domain R1 then allows thioester reduction by NADPH of glycine betainoyl thioester to glycine betaine aldehyde, which is in turn reduced to choline by the aldehyde reductase domain R2. This chain is Glycine betaine reductase ATRR, found in Emericella nidulans (strain FGSC A4 / ATCC 38163 / CBS 112.46 / NRRL 194 / M139) (Aspergillus nidulans).